We begin with the raw amino-acid sequence, 565 residues long: Sulfite reductase [NADPH] hemoprotein beta-component (565 aa).

Cys429, Cys435, Cys474, and Cys478 together coordinate [4Fe-4S] cluster. Cys478 contributes to the siroheme binding site.

This sequence belongs to the nitrite and sulfite reductase 4Fe-4S domain family. As to quaternary structure, alpha(8)-beta(8). The alpha component is a flavoprotein, the beta component is a hemoprotein. Siroheme serves as cofactor. Requires [4Fe-4S] cluster as cofactor.

It carries out the reaction hydrogen sulfide + 3 NADP(+) + 3 H2O = sulfite + 3 NADPH + 4 H(+). It functions in the pathway sulfur metabolism; hydrogen sulfide biosynthesis; hydrogen sulfide from sulfite (NADPH route): step 1/1. Its function is as follows. Component of the sulfite reductase complex that catalyzes the 6-electron reduction of sulfite to sulfide. This is one of several activities required for the biosynthesis of L-cysteine from sulfate. The protein is Sulfite reductase [NADPH] hemoprotein beta-component of Shewanella oneidensis (strain ATCC 700550 / JCM 31522 / CIP 106686 / LMG 19005 / NCIMB 14063 / MR-1).